We begin with the raw amino-acid sequence, 382 residues long: Chorismate synthase (382 aa).

R39 and R45 together coordinate NADP(+). FMN-binding positions include 127–129 (RAS), 245–246 (QA), G290, 305–309 (KPIPT), and R331.

It belongs to the chorismate synthase family. As to quaternary structure, homotetramer. FMNH2 serves as cofactor.

It catalyses the reaction 5-O-(1-carboxyvinyl)-3-phosphoshikimate = chorismate + phosphate. It participates in metabolic intermediate biosynthesis; chorismate biosynthesis; chorismate from D-erythrose 4-phosphate and phosphoenolpyruvate: step 7/7. Catalyzes the anti-1,4-elimination of the C-3 phosphate and the C-6 proR hydrogen from 5-enolpyruvylshikimate-3-phosphate (EPSP) to yield chorismate, which is the branch point compound that serves as the starting substrate for the three terminal pathways of aromatic amino acid biosynthesis. This reaction introduces a second double bond into the aromatic ring system. The sequence is that of Chorismate synthase from Desulfitobacterium hafniense (strain DSM 10664 / DCB-2).